A 149-amino-acid chain; its full sequence is NADH-quinone oxidoreductase subunit A (149 aa).

The next 3 helical transmembrane spans lie at 16–36, 68–88, and 98–118; these read FGIF…GAWF, FYLV…LFAW, and LGFI…VYLV.

This sequence belongs to the complex I subunit 3 family. In terms of assembly, NDH-1 is composed of 13 different subunits. Subunits NuoA, H, J, K, L, M, N constitute the membrane sector of the complex.

Its subcellular location is the cell inner membrane. It catalyses the reaction a quinone + NADH + 5 H(+)(in) = a quinol + NAD(+) + 4 H(+)(out). NDH-1 shuttles electrons from NADH, via FMN and iron-sulfur (Fe-S) centers, to quinones in the respiratory chain. The immediate electron acceptor for the enzyme in this species is believed to be ubiquinone. Couples the redox reaction to proton translocation (for every two electrons transferred, four hydrogen ions are translocated across the cytoplasmic membrane), and thus conserves the redox energy in a proton gradient. This is NADH-quinone oxidoreductase subunit A from Cronobacter sakazakii (strain ATCC BAA-894) (Enterobacter sakazakii).